The following is a 198-amino-acid chain: dCTP deaminase (198 aa).

Residues 110 to 115 (RSSLAR), aspartate 128, 136 to 138 (VLE), tyrosine 171, lysine 178, and glutamine 182 each bind dCTP. Glutamate 138 acts as the Proton donor/acceptor in catalysis. The segment at 168–198 (ARPYNKREDAKYRDQKGAVASRISQDEKVNK) is disordered. Basic and acidic residues predominate over residues 172 to 183 (NKREDAKYRDQK).

Belongs to the dCTP deaminase family. As to quaternary structure, homotrimer.

It carries out the reaction dCTP + H2O + H(+) = dUTP + NH4(+). Its pathway is pyrimidine metabolism; dUMP biosynthesis; dUMP from dCTP (dUTP route): step 1/2. Its function is as follows. Catalyzes the deamination of dCTP to dUTP. The polypeptide is dCTP deaminase (Colwellia psychrerythraea (strain 34H / ATCC BAA-681) (Vibrio psychroerythus)).